The chain runs to 51 residues: Small integral membrane protein 38 (51 aa).

The helical transmembrane segment at 13–33 threads the bilayer; the sequence is PLLALLVVILLARLILWSCLG.

Its subcellular location is the membrane. In Homo sapiens (Human), this protein is Small integral membrane protein 38.